Reading from the N-terminus, the 156-residue chain is MSDRKPVRGRHQARKRAVALLFEAEVRGISAAEVVDTRAALAEAKPDIARLHPYTAAVARGVSEHAAHIDDLITAHLRGWTLDRLPAVDRAILRVSVWELLHAADVPEPVVVDEAVQLAKELSTDDSPGFVNGVLGQVMLVTPQLRAAAQAVRGGA.

This sequence belongs to the NusB family.

In terms of biological role, involved in transcription antitermination. Required for transcription of ribosomal RNA (rRNA) genes. Binds specifically to the boxA antiterminator sequence of the ribosomal RNA (rrn) operons. This Mycobacterium tuberculosis (strain CDC 1551 / Oshkosh) protein is Transcription antitermination protein NusB.